We begin with the raw amino-acid sequence, 130 residues long: Small ribosomal subunit protein uS9 (130 aa).

Belongs to the universal ribosomal protein uS9 family.

This chain is Small ribosomal subunit protein uS9, found in Anoxybacillus flavithermus (strain DSM 21510 / WK1).